Here is a 160-residue protein sequence, read N- to C-terminus: MAKQKKHPTGTIAQNKKARHDYFIEHRFEAGLVLAGWEVKSLRASKLQLVDSYVLLKDGEAWLLGSHITPLTTASTHVIADPVRTRKLLLNARELEKLAAAVQQKGYACICLSWYWSKHLVKCEIALGKGKKEYDKRDTERERDSNRELHRAVRNKGKED.

Residues 134–160 (YDKRDTERERDSNRELHRAVRNKGKED) form a disordered region.

It belongs to the SmpB family.

The protein resides in the cytoplasm. Functionally, required for rescue of stalled ribosomes mediated by trans-translation. Binds to transfer-messenger RNA (tmRNA), required for stable association of tmRNA with ribosomes. tmRNA and SmpB together mimic tRNA shape, replacing the anticodon stem-loop with SmpB. tmRNA is encoded by the ssrA gene; the 2 termini fold to resemble tRNA(Ala) and it encodes a 'tag peptide', a short internal open reading frame. During trans-translation Ala-aminoacylated tmRNA acts like a tRNA, entering the A-site of stalled ribosomes, displacing the stalled mRNA. The ribosome then switches to translate the ORF on the tmRNA; the nascent peptide is terminated with the 'tag peptide' encoded by the tmRNA and targeted for degradation. The ribosome is freed to recommence translation, which seems to be the essential function of trans-translation. This is SsrA-binding protein from Pseudomonas fluorescens (strain SBW25).